We begin with the raw amino-acid sequence, 169 residues long: PSDKRLDADISPKPTIFLPSVAETNLHKTGTYLCILEKFFPDVIRVYWKDKNGNTILDSQEGDTLKTKGTYMKFSWLTVPERSMGKEHRCIVKHENNKGGADQEIFFPSIKKVATTCWQDKNDVLQLQFMSTSAYYTYLLLLLKSVIYLAIISFSLLRRTSVCCNEKRS.

The interval 1–136 (PSDKRLDADI…LQFMSTSAYY (136 aa)) is c region. The chain crosses the membrane as a helical span at residues 137–157 (TYLLLLLKSVIYLAIISFSLL). Residues 158–169 (RRTSVCCNEKRS) lie on the Cytoplasmic side of the membrane.

It is found in the membrane. The polypeptide is T-cell receptor gamma chain C region DFL12 (Mus musculus (Mouse)).